The following is a 426-amino-acid chain: 3-phosphoshikimate 1-carboxyvinyltransferase (426 aa).

Residues Lys-22, Ser-23, and Arg-27 each contribute to the 3-phosphoshikimate site. Lys-22 provides a ligand contact to phosphoenolpyruvate. Gly-96 and Arg-124 together coordinate phosphoenolpyruvate. 3-phosphoshikimate is bound by residues Ser-170, Ser-171, Gln-172, Ser-198, Asp-314, Asn-337, and Lys-341. Gln-172 is a phosphoenolpyruvate binding site. Catalysis depends on Asp-314, which acts as the Proton acceptor. Phosphoenolpyruvate is bound by residues Arg-345, Arg-387, and Lys-412.

This sequence belongs to the EPSP synthase family. As to quaternary structure, monomer.

It is found in the cytoplasm. It carries out the reaction 3-phosphoshikimate + phosphoenolpyruvate = 5-O-(1-carboxyvinyl)-3-phosphoshikimate + phosphate. Its pathway is metabolic intermediate biosynthesis; chorismate biosynthesis; chorismate from D-erythrose 4-phosphate and phosphoenolpyruvate: step 6/7. Catalyzes the transfer of the enolpyruvyl moiety of phosphoenolpyruvate (PEP) to the 5-hydroxyl of shikimate-3-phosphate (S3P) to produce enolpyruvyl shikimate-3-phosphate and inorganic phosphate. This Shewanella halifaxensis (strain HAW-EB4) protein is 3-phosphoshikimate 1-carboxyvinyltransferase.